A 474-amino-acid chain; its full sequence is C6 finger domain transcription factor aclZ (474 aa).

The segment at residues 42-69 (CNQCHAAKVRCSGERTGCDRCNNLQYQC) is a DNA-binding region (zn(2)-C6 fungal-type). Disordered regions lie at residues 85 to 148 (RGNK…SHSA) and 177 to 206 (MSSD…DSHT). Over residues 90-105 (VRTTTEALQRPATAST) the composition is skewed to polar residues. The span at 117–138 (TDQRSENDPLSRSDFGEQDAAH) shows a compositional bias: basic and acidic residues.

The protein resides in the nucleus. Functionally, transcription factor that specifically regulates the gene cluster that mediates the biosynthesis of aspirochlorine (or antibiotic A30641), an unusual halogenated spiro compound with distinctive antifungal properties due to selective inhibition of protein biosynthesis, and which is also active against bacteria, viruses, and murine tumor cells. The protein is C6 finger domain transcription factor aclZ of Aspergillus oryzae (strain ATCC 42149 / RIB 40) (Yellow koji mold).